A 183-amino-acid chain; its full sequence is Capsid protein (183 aa).

The interval Asn-136–Cys-183 is disordered. Basic residues predominate over residues Val-149 to Ser-176. Phosphoserine; by host is present on residues Ser-155, Ser-162, and Ser-170. Residues Ser-155–Pro-161 form a 1; half-length repeat. The interval Ser-155–Gln-177 is 3 X 8 AA repeats of S-P-R-R-R-[PR]-S-Q. The short motif at Arg-158–Arg-175 is the Bipartite nuclear localization signal element. 2 repeat units span residues Ser-162–Gln-169 and Ser-170–Gln-177. The tract at residues Gln-177–Cys-183 is RNA binding.

Belongs to the orthohepadnavirus core antigen family. In terms of assembly, homodimerizes, then multimerizes. Interacts with cytosol exposed regions of viral L glycoprotein present in the reticulum-to-Golgi compartment. Interacts with human FLNB. Phosphorylated form interacts with host importin alpha; this interaction depends on the exposure of the NLS, which itself depends upon genome maturation and/or phosphorylation of the capsid protein. Interacts with host NUP153. Phosphorylated by host SRPK1, SRPK2, and maybe protein kinase C or GAPDH. Phosphorylation is critical for pregenomic RNA packaging. Protein kinase C phosphorylation is stimulated by HBx protein and may play a role in transport of the viral genome to the nucleus at the late step during the viral replication cycle.

The protein localises to the virion. It localises to the host cytoplasm. In terms of biological role, self assembles to form an icosahedral capsid. Most capsids appear to be large particles with an icosahedral symmetry of T=4 and consist of 240 copies of capsid protein, though a fraction forms smaller T=3 particles consisting of 180 capsid proteins. Entering capsids are transported along microtubules to the nucleus. Phosphorylation of the capsid is thought to induce exposure of nuclear localization signal in the C-terminal portion of the capsid protein that allows binding to the nuclear pore complex via the importin (karyopherin-) alpha and beta. Capsids are imported in intact form through the nuclear pore into the nuclear basket, where it probably binds NUP153. Only capsids that contain the mature viral genome can release the viral DNA and capsid protein into the nucleoplasm. Immature capsids get stuck in the basket. Capsids encapsulate the pre-genomic RNA and the P protein. Pre-genomic RNA is reverse-transcribed into DNA while the capsid is still in the cytoplasm. The capsid can then either be directed to the nucleus, providing more genomes for transcription, or bud through the endoplasmic reticulum to provide new virions. The protein is Capsid protein of Pan troglodytes (Chimpanzee).